The sequence spans 288 residues: Protein PGR (288 aa).

Helical transmembrane passes span 1-21 (METSPQFRLIFAVIISSLIAF), 29-49 (LDLSGGIAGFLVMTIHFTAGF), 91-111 (VLCNSGIASVLVVIACTLTGW), 123-143 (IVTALIGGIIGHYACCNGDTW), 177-197 (LLAALAAGTTVGLTFLIFGLF), 210-230 (LLVIPLSALAGLCGSLIDSIL), and 268-288 (VNFVSILLTSFLTSIASVYIF).

The protein belongs to the TMEM19 family. Expressed in the vasculature of leaves, roots, inflorescences, siliques, anther filaments and sepals. Detected primarily in the phloem tissues, including in the root ans shoot apical meristems.

It is found in the cell membrane. Involved in the glucose-triggered developmental leaf growth process. The protein is Protein PGR of Arabidopsis thaliana (Mouse-ear cress).